The chain runs to 582 residues: MSALRAEQQPSRSGERQPLVAQGRWGPRRWRRTAAAAVLLVEMLERAAFFGVTSNLVLYLNSLNFNWDGEHASRATLLFLGASYLLAPVGGWLADVYLGRFLAISLSLLLYLAATGLLLTTITDDGRRSFCGEMPELPLKPACPSANCQGSWSSPYCATTLYLVLLLLALAASSVRSNLTSFGADQVMDLGRDATRRFFNWFYWSINLGAILSLLVVAFIEQNISFLQGYSIIVGLVGLAFFIFLIATPVFITKPPTGSQVSSMLNLAFQNCCPGWQWWRRPSSRNSEGAHLLPDQRSNQPGPSPQEDMANFQVLLKVLPVMVTLVPYWMVYFQMQSTYVLQGLHLHIPNIFRTNPNISLPLRSDSSNYRIPEAWLLLANVAVILILVPVKDHLIDPLLLRCKLLPSALQKMALGMFFGFTSIIVAGVLEKERLQYIAANQTVPQLIGKDLYYAAPLSIWWQIPQYLLIGISEIFASIPGLEFAYSEAPRSMQGAIMGIFFCLSGVGSLLGSGLVALLSLPGGWMYCPKDFGNINNCRMDLYFFLLAGIQAVTAVLFLWIAGRYERTRQDPDSQNSTSRVRG.

Positions 1 to 20 are disordered; the sequence is MSALRAEQQPSRSGERQPLV. A run of 4 helical transmembrane segments spans residues 33-53, 77-97, 102-122, and 155-175; these read TAAAAVLLVEMLERAAFFGVT, LLFLGASYLLAPVGGWLADVY, LAISLSLLLYLAATGLLLTTI, and PYCATTLYLVLLLLALAASSV. Residue Asn-178 is glycosylated (N-linked (GlcNAc...) asparagine). The chain crosses the membrane as a helical span at residues 201–221; sequence WFYWSINLGAILSLLVVAFIE. N-linked (GlcNAc...) asparagine glycosylation is present at Asn-223. Transmembrane regions (helical) follow at residues 232–252 and 312–332; these read IIVGLVGLAFFIFLIATPVFI and FQVLLKVLPVMVTLVPYWMVY. Asn-357 carries N-linked (GlcNAc...) asparagine glycosylation. Transmembrane regions (helical) follow at residues 371 to 391 and 409 to 429; these read IPEAWLLLANVAVILILVPVK and LQKMALGMFFGFTSIIVAGVL. A glycan (N-linked (GlcNAc...) asparagine) is linked at Asn-440. 3 helical membrane passes run 466–485, 498–518, and 541–561; these read YLLIGISEIFASIPGLEFAY, GIFFCLSGVGSLLGSGLVALL, and LYFFLLAGIQAVTAVLFLWIA. Asn-575 carries N-linked (GlcNAc...) asparagine glycosylation.

The protein belongs to the major facilitator superfamily. Proton-dependent oligopeptide transporter (POT/PTR) (TC 2.A.17) family. Abundant expression in lung, spleen and thymus, and detected faintly in brain, liver, adrenal gland and heart at protein level.

Its subcellular location is the lysosome membrane. The protein resides in the endosome membrane. The catalysed reaction is N-acetyl-D-muramoyl-L-alanyl-D-isoglutamine(out) + n H(+)(out) = N-acetyl-D-muramoyl-L-alanyl-D-isoglutamine(in) + n H(+)(in). The enzyme catalyses glycylglycylglycine(out) + n H(+)(out) = glycylglycylglycine(in) + n H(+)(in). It catalyses the reaction carnosine(out) + n H(+)(out) = carnosine(in) + n H(+)(in). It carries out the reaction L-histidine(out) + n H(+)(out) = L-histidine(in) + n H(+)(in). Functionally, proton-coupled amino-acid transporter that transports free histidine and certain di- and tripeptides, and is involved in innate immune response. Also able to transport carnosine. Involved in the detection of microbial pathogens by toll-like receptors (TLRs) and NOD-like receptors (NLRs), probably by mediating transport of bacterial peptidoglycans across the endolysosomal membrane: catalyzes the transport of certain bacterial peptidoglycans, such as muramyl dipeptide (MDP), the NOD2 ligand. This chain is Solute carrier family 15 member 3 (Slc15a3), found in Rattus norvegicus (Rat).